The sequence spans 906 residues: MLGLGTLARKIFGTPNDRKVKSVRSLVARINELETEFQALSDEGIKQKTAEFQRRVQEGGESLDDLLPEAFANCREGARRALGLRAFDVQLMGGIFLHQGNIAEMKTGEGKTLVATFPAYLNALAGKGVHVVTVNDYLAKRDSEWMGKVYAQLGLTTGVVYPFQSEEEKKAAYRADITYATNNELGFDYLRDNMKASKEEMKQRGHFFAIVDEVDSILIDEARTPLIISGPSQDRSDLYTKVDKLIPELVEEHYKLDEKTRNVTFTEEGNEFLETRLHETGLLPEGQSLYDPESTTIVHHVNQGLRAHKLFHRDQQYIVRNDEIMLIDEFTGRMMRGRRLSDGLHQAIEAKEGVSIQPENVTLASVTFQNYFRLYDKLGGMTGTAATEAEEFMEIYGLGVVEVPTNRPVARTDEHDAVYRTAREKNDGIVASIKEAHERGQPILVGTTSIDKSEALSELLKAAGIPHNVLNARQHEQEAQIVADAGKPGAVTIATNMAGRGTDIQLGGNVEMKVMQALAADPTAHPDEIRARIEAEHAEEKQKVIDAGGLFVLGTERHESRRIDNQLRGRSGRQGDPGRSAFFLSLEDDLMRIFGSDRLDKVLSTLGMKDGEAIVHPWVNKSLEKAQAKVEARNFDIRKQLLKFDDVMNDQRKAIFSQRLEIMEAEDLSDIAQDMRYQVIDDLIDMHMPPKSYSDQWDIEGMHRAVMDKLGLDAPLAKWAQEEGVDQDVVRERLCEAADRQIADKTAAFGPETMRSIEKQILLQAIDAKWREHLLTLEHLRSVVGFRGYAQRDPLSEYKTEAFALFESMLNSLRQDVTQKLAQVRPLSEEEQQAVMRQFLDQQRTAAEAPASVPQPQAAVAPQPAPELVGADNGESQPQAWGDVARNDPCPCGSGLKYKHCHGRLD.

ATP-binding positions include Q90, 108–112, and D503; that span reads GEGKT. The segment at 845–882 is disordered; that stretch reads TAAEAPASVPQPQAAVAPQPAPELVGADNGESQPQAWG. Residues 846–862 are compositionally biased toward low complexity; sequence AAEAPASVPQPQAAVAP. C890, C892, C901, and H902 together coordinate Zn(2+).

It belongs to the SecA family. In terms of assembly, monomer and homodimer. Part of the essential Sec protein translocation apparatus which comprises SecA, SecYEG and auxiliary proteins SecDF-YajC and YidC. Zn(2+) serves as cofactor.

It is found in the cell inner membrane. It localises to the cytoplasm. The catalysed reaction is ATP + H2O + cellular proteinSide 1 = ADP + phosphate + cellular proteinSide 2.. Its function is as follows. Part of the Sec protein translocase complex. Interacts with the SecYEG preprotein conducting channel. Has a central role in coupling the hydrolysis of ATP to the transfer of proteins into and across the cell membrane, serving both as a receptor for the preprotein-SecB complex and as an ATP-driven molecular motor driving the stepwise translocation of polypeptide chains across the membrane. The sequence is that of Protein translocase subunit SecA from Cereibacter sphaeroides (strain ATCC 17025 / ATH 2.4.3) (Rhodobacter sphaeroides).